We begin with the raw amino-acid sequence, 131 residues long: Profilin LP04 (131 aa).

Belongs to the profilin family. Occurs in many kinds of cells as a complex with monomeric actin in a 1:1 ratio.

It localises to the cytoplasm. Its subcellular location is the cytoskeleton. Its function is as follows. Binds to actin and affects the structure of the cytoskeleton. At high concentrations, profilin prevents the polymerization of actin, whereas it enhances it at low concentrations. By binding to PIP2, it inhibits the formation of IP3 and DG. The polypeptide is Profilin LP04 (Oryza sativa subsp. indica (Rice)).